A 359-amino-acid chain; its full sequence is 3-dehydroquinate synthase (359 aa).

Residues 69 to 74 (SGESSK), 103 to 107 (GVVGD), 127 to 128 (TT), lysine 139, lysine 148, and 166 to 169 (TLST) each bind NAD(+). Positions 181, 242, and 259 each coordinate Zn(2+).

It belongs to the sugar phosphate cyclases superfamily. Dehydroquinate synthase family. NAD(+) serves as cofactor. Requires Co(2+) as cofactor. It depends on Zn(2+) as a cofactor.

The protein resides in the cytoplasm. It carries out the reaction 7-phospho-2-dehydro-3-deoxy-D-arabino-heptonate = 3-dehydroquinate + phosphate. The protein operates within metabolic intermediate biosynthesis; chorismate biosynthesis; chorismate from D-erythrose 4-phosphate and phosphoenolpyruvate: step 2/7. Catalyzes the conversion of 3-deoxy-D-arabino-heptulosonate 7-phosphate (DAHP) to dehydroquinate (DHQ). The polypeptide is 3-dehydroquinate synthase (Oceanobacillus iheyensis (strain DSM 14371 / CIP 107618 / JCM 11309 / KCTC 3954 / HTE831)).